Reading from the N-terminus, the 202-residue chain is Large ribosomal subunit protein bL25 (202 aa).

Belongs to the bacterial ribosomal protein bL25 family. CTC subfamily. Part of the 50S ribosomal subunit; part of the 5S rRNA/L5/L18/L25 subcomplex. Contacts the 5S rRNA. Binds to the 5S rRNA independently of L5 and L18.

Functionally, this is one of the proteins that binds to the 5S RNA in the ribosome where it forms part of the central protuberance. In Paramagnetospirillum magneticum (strain ATCC 700264 / AMB-1) (Magnetospirillum magneticum), this protein is Large ribosomal subunit protein bL25.